The primary structure comprises 479 residues: Gamma-aminobutyric acid receptor subunit rho-1 (479 aa).

The first 21 residues, 1-21 (MLAVPNMRFGIFLLWWGWVLA), serve as a signal peptide directing secretion. At 22-280 (TESRMHWPGR…LYINFTLRRH (259 aa)) the chain is on the extracellular side. The interval 32–55 (EVHEMSKKGRPQRQRREVHEDAHK) is disordered. Residues 45–55 (QRREVHEDAHK) show a composition bias toward basic and acidic residues. Arg125 contributes to the 4-aminobutanoate binding site. An N-linked (GlcNAc...) asparagine glycan is attached at Asn140. 4-aminobutanoate is bound at residue Ser189. An intrachain disulfide couples Cys198 to Cys212. Glu217 contacts 4-aminobutanoate. N-linked (GlcNAc...) asparagine glycosylation is found at Asn234 and Asn274. The chain crosses the membrane as a helical span at residues 281–301 (IFFFLLQTYFPATLMVMLSWV). At 302-313 (SFWIDRRAVPAR) the chain is on the cytoplasmic side. A helical transmembrane segment spans residues 314-334 (VPLGITTVLTMSTIITGVNAS). Topologically, residues 335 to 345 (MPRVSYIKAVD) are extracellular. A helical membrane pass occupies residues 346–366 (IYLWVSFVFVFLSVLEYAAVN). The Cytoplasmic portion of the chain corresponds to 367–457 (YLTTVQERKE…MRIDTHAIDK (91 aa)). Residues 458 to 478 (YSRIIFPAAYILFNLIYWSIF) traverse the membrane as a helical segment. Position 479 (Ser479) is a topological domain, extracellular.

The protein belongs to the ligand-gated ion channel (TC 1.A.9) family. Gamma-aminobutyric acid receptor (TC 1.A.9.5) subfamily. GABRR1 sub-subfamily. In terms of assembly, three rho subunits (rho-1/GBRR1, rho-2/GBRR2 and rho-3/GBRR3) coassemble either to form functional homopentamers or heteropentamers. Rho-1/GBRR1 subunits can also associate with alpha-1/GBRA1 subunits to form a functional GABAAR. Interacts with SQSTM1. As to expression, highly expressed in the retina. Expressed in a lesser extent in brain, lung and thymus.

It localises to the postsynaptic cell membrane. It is found in the cell membrane. It carries out the reaction chloride(in) = chloride(out). Inhibited by TPMPA, a rho-specific antagonist, when forming a homopentamer. In contrast with other GABAARs, rho-1 GABAAR is not inhibited by bicuculline, when forming a homopentamer. Rho subunit of the pentameric ligand-gated chloride channels responsible for mediating the effects of gamma-aminobutyric acid (GABA), the major inhibitory neurotransmitter in the brain. Rho-containing GABA-gated chloride channels are a subclass of GABA(A) receptors (GABAARs) entirely composed of rho subunits, where GABA molecules bind at the rho intersubunit interfaces. When activated by GABA, rho-GABAARs selectively allow the flow of chloride anions across the cell membrane down their electrochemical gradient. Rho-1 subunits are primarily expressed in retina where rho-1-containing GABAARs may play a role in retinal neurotransmission. Rho-1 GABAARs are also involved in neuronal tonic (extrasynaptic) and phasic (synaptic) transmission in the Purkinje neurons of the cerebellum. Rho-1 GABAARs may also contribute to the regulation of glial development in the cerebellum by controlling extrasynaptic transmission. This Homo sapiens (Human) protein is Gamma-aminobutyric acid receptor subunit rho-1.